Consider the following 276-residue polypeptide: Pantothenate synthetase (276 aa).

Met-27–His-34 is an ATP binding site. His-34 serves as the catalytic Proton donor. (R)-pantoate is bound at residue Gln-58. Gln-58 provides a ligand contact to beta-alanine. Position 145-148 (Gly-145–Asp-148) interacts with ATP. Residue Gln-151 coordinates (R)-pantoate. ATP contacts are provided by residues Ile-174 and Leu-182–Arg-185.

The protein belongs to the pantothenate synthetase family. Homodimer.

Its subcellular location is the cytoplasm. The catalysed reaction is (R)-pantoate + beta-alanine + ATP = (R)-pantothenate + AMP + diphosphate + H(+). The protein operates within cofactor biosynthesis; (R)-pantothenate biosynthesis; (R)-pantothenate from (R)-pantoate and beta-alanine: step 1/1. Functionally, catalyzes the condensation of pantoate with beta-alanine in an ATP-dependent reaction via a pantoyl-adenylate intermediate. This chain is Pantothenate synthetase, found in Aromatoleum aromaticum (strain DSM 19018 / LMG 30748 / EbN1) (Azoarcus sp. (strain EbN1)).